A 425-amino-acid chain; its full sequence is Serine--tRNA ligase (425 aa).

233–235 contacts L-serine; sequence TAE. 264-266 contacts ATP; it reads RRE. Glu287 provides a ligand contact to L-serine. Position 351–354 (351–354) interacts with ATP; it reads EISS. L-serine is bound at residue Ser385.

Belongs to the class-II aminoacyl-tRNA synthetase family. Type-1 seryl-tRNA synthetase subfamily. As to quaternary structure, homodimer. The tRNA molecule binds across the dimer.

The protein resides in the cytoplasm. It carries out the reaction tRNA(Ser) + L-serine + ATP = L-seryl-tRNA(Ser) + AMP + diphosphate + H(+). The enzyme catalyses tRNA(Sec) + L-serine + ATP = L-seryl-tRNA(Sec) + AMP + diphosphate + H(+). It functions in the pathway aminoacyl-tRNA biosynthesis; selenocysteinyl-tRNA(Sec) biosynthesis; L-seryl-tRNA(Sec) from L-serine and tRNA(Sec): step 1/1. Its function is as follows. Catalyzes the attachment of serine to tRNA(Ser). Is also able to aminoacylate tRNA(Sec) with serine, to form the misacylated tRNA L-seryl-tRNA(Sec), which will be further converted into selenocysteinyl-tRNA(Sec). This is Serine--tRNA ligase from Prochlorococcus marinus (strain SARG / CCMP1375 / SS120).